The primary structure comprises 300 residues: Tyrosine phosphatase-like protein J1 (300 aa).

In terms of domain architecture, Tyrosine-protein phosphatase spans Leu27–Phe294.

It belongs to the protein-tyrosine phosphatase family.

The sequence is that of Tyrosine phosphatase-like protein J1 (J1) from Microplitis demolitor (Parasitoid wasp).